The sequence spans 138 residues: ATP synthase epsilon chain (138 aa).

It belongs to the ATPase epsilon chain family. As to quaternary structure, F-type ATPases have 2 components, CF(1) - the catalytic core - and CF(0) - the membrane proton channel. CF(1) has five subunits: alpha(3), beta(3), gamma(1), delta(1), epsilon(1). CF(0) has four main subunits: a(1), b(1), b'(1) and c(9-12).

It localises to the cellular thylakoid membrane. In terms of biological role, produces ATP from ADP in the presence of a proton gradient across the membrane. Its function is as follows. The complex from the organism is particularly stable to disruption and remains functional after 6 hours at 55 degrees Celsius. In Thermosynechococcus vestitus (strain NIES-2133 / IAM M-273 / BP-1), this protein is ATP synthase epsilon chain.